The sequence spans 358 residues: Trans-enoyl reductase pvhC (358 aa).

Valine 48 to lysine 51 is an NADP(+) binding site. Substrate is bound at residue isoleucine 134–leucine 141. Residues serine 169 to cysteine 172, serine 192 to asparagine 195, tyrosine 210, and leucine 257 to glutamate 258 each bind NADP(+). Glycine 278–leucine 282 contacts substrate. Valine 347–serine 348 contacts NADP(+).

This sequence belongs to the zinc-containing alcohol dehydrogenase family. In terms of assembly, monomer.

It functions in the pathway secondary metabolite biosynthesis. In terms of biological role, trans-enoyl reductase; part of the gene cluster that mediates the biosynthesis of varicidin A, an antifungal natural product containing a cis-octahydrodecalin core. The PKS module of pvhA together with the enoylreductase pvhC catalyze the formation of the polyketide unit which is then conjugated to L-isoleucine by the condensation domain of the NRPS module. Activity of the Dieckmann cyclase domain (RED) of pvhA results in release of an acyclic tetramate. The cytochrome P450 monooxygenase pvhE then catalyzes the oxidation of the C21 methyl group to a to carboxylate group. The methyltransferase pvhD then further methylates the pvhE product. The Diels-Alderase pvhB is able to catalyze Diels-Alder cycloaddition using both pvhE and pvhD products as substrates to form the decalin ring, yielding varicidin B and A, respectively. The polypeptide is Trans-enoyl reductase pvhC (Talaromyces variabilis (Penicillium variabile)).